The sequence spans 422 residues: Tyrosine-protein kinase STYK1 (422 aa).

A helical membrane pass occupies residues 26–46 (VIIVPTLLVTIFLILLGVILW). Residues 114 to 384 (SEVLEQICSG…ELRLRLEAAI (271 aa)) form the Protein kinase domain. ATP is bound by residues 120–128 (ICSGSCGPI) and K147. Residue D251 is the Proton acceptor of the active site.

This sequence belongs to the protein kinase superfamily. Tyr protein kinase family. As to expression, widely expressed. Highly expressed in brain, placenta and prostate. Expressed in tumor cells such as hepatoma cells L-02, cervix carcinoma cells HeLa, ovary cancer cells Ho8910 and chronic myelogenous leukemia cells K-562, but not in other tumor cells such as epidermoid carcinoma (A-431). Undetectable in most normal lung tissues, widely expressed in lung cancers.

It is found in the membrane. It carries out the reaction L-tyrosyl-[protein] + ATP = O-phospho-L-tyrosyl-[protein] + ADP + H(+). In terms of biological role, probable tyrosine protein-kinase, which has strong transforming capabilities on a variety of cell lines. When overexpressed, it can also induce tumor cell invasion as well as metastasis in distant organs. May act by activating both MAP kinase and phosphatidylinositol 3'-kinases (PI3K) pathways. In Homo sapiens (Human), this protein is Tyrosine-protein kinase STYK1 (STYK1).